The sequence spans 132 residues: MAPSPRTGSRQDATALPSMSSTFWAFMILASLLIAYCSQLAAGTCEIVTLDRDSSQPRRTIARQTARCACRKGQIAGTTRARPACVDARIIRTKQWCDMLPCLEGEGCDLLINRSGWTCTQPGGRIKTTTVS.

The signal sequence occupies residues 1-43; sequence MAPSPRTGSRQDATALPSMSSTFWAFMILASLLIAYCSQLAAG. N113 is a glycosylation site (N-linked (GlcNAc...) asparagine).

It belongs to the TAFA family.

The protein resides in the secreted. Its function is as follows. Acts as a chemokine-like protein by regulating cell proliferation and migration through activation of G protein-coupled receptors (GPCRs), such as S1PR2 and FPR2. Stimulates chemotactic migration of macrophages mediated by the MAPK3/ERK1 and AKT1 pathway. Blocks TNFSF11/RANKL-induced osteoclast formation from macrophages by inhibiting up-regulation of osteoclast fusogenic and differentiation genes. Stimulation of macrophage migration and inhibition of osteoclast formation is mediated through the GPCR FPR2. Acts as an adipokine by negatively regulating vascular smooth muscle cell (VSMC) proliferation and migration in response to platelet-derived growth factor stimulation via GPCR S1PR2 and G protein GNA12/GNA13-transmitted RHOA signaling. Inhibits injury-induced cell proliferation and neointima formation in the femoral arteries. This Bos taurus (Bovine) protein is Chemokine-like protein TAFA-5 (TAFA5).